We begin with the raw amino-acid sequence, 681 residues long: Cryptochrome-1 (681 aa).

The CNT1, binds chromophores to sense blue light and mediate CRY dimerization stretch occupies residues 1 to 489 (MSGSVSGCGS…AKARLHEALS (489 aa)). A Photolyase/cryptochrome alpha/beta domain is found at 12–141 (GCSIVWFRRD…AVRSFNADLL (130 aa)). Cys-80 and Cys-190 are joined by a disulfide. Tyr-235 is a binding site for FAD. Mg(2+) is bound at residue Asn-238. Arg-239 lines the ATP pocket. Residues Lys-241, Ser-244, and Thr-246 each coordinate Mg(2+). FAD contacts are provided by residues 247–251 (TSFLS) and Ser-293. Residue His-358 coordinates Mg(2+). FAD-binding positions include Asp-359 and 390-392 (DAD). 359-360 (DR) lines the ATP pocket. Asp-409 is a binding site for ATP. Positions 490–681 (QMWQLEAASR…LNWRRLSQTG (192 aa)) are CCT1/CCE1, mediates blue light signaling. Disordered stretches follow at residues 525–598 (RDIT…EPAS) and 616–664 (STED…TSSY). Residues 583–598 (MVNTNQAQQRRAEPAS) are compositionally biased toward polar residues. Ser-616 carries the phosphoserine modification. Thr-621 is subject to Phosphothreonine.

This sequence belongs to the DNA photolyase class-1 family. Homodimer. Interacts with ADO1, COP1 and PHYA. Interacts specifically with the dark/far-red (Pr) state of PHYB, but not with the red light-activated (Pfr). Interacts with PIF4 and PIF5 in the nucleus in response to low blue light (LBL). Binds to SPA1 and SPA4 in response to blue light, this interaction prevents SPA1/COP1 complex formation and thus avoid COP1-dependent degradation of the transcription factor HY5 by the proteasome and promotes hypocotyl elongation. Interacts with TCP2. Binding to ATP mediates conformational changes which facilitate flavin binding. FAD serves as cofactor. Requires (6R)-5,10-methylene-5,6,7,8-tetrahydrofolate as cofactor. Autophosphorylated; in response to blue light and when in complex with FAD cofactor. Kinase activity is optimal in the presence of magnesium ions, about 30 percent of the optimal activity in the presence of manganese ions, but inactive with calcium ions. Adopts an open conformation when phosphorylated upon photoexcitation and thus interacts with signaling partner proteins. As to expression, widely expressed. Expressed in the aerial tissues (e.g. cotyledons and leaf primordia), but not detected in the roots.

Its subcellular location is the cytoplasm. The protein resides in the nucleus. The protein localises to the PML body. Its activity is regulated as follows. Light exposure induces a conformational change in the C-terminal domain CCT1 required for activity. In terms of biological role, photoreceptor that mediates primarily blue light inhibition of hypocotyl elongation and photoperiodic control of floral initiation, and regulates other light responses, including circadian rhythms, tropic growth, stomata opening, guard cell development, root development, bacterial and viral pathogen responses, abiotic stress responses, cell cycles, programmed cell death, apical dominance, fruit and ovule development, seed dormancy, and magnetoreception. Photoexcited cryptochromes interact with signaling partner proteins to alter gene expression at both transcriptional and post-translational levels and, consequently, regulate the corresponding metabolic and developmental programs. Blue-light absorbing flavoprotein that activates reversible flavin photoreduction via an electron transport chain comprising a tryptophan triad (W-324, W-377 and W-400), accompanied by a large conformational change upon photoexcitation, or via an alternative electron transport that involves small metabolites, including NADPH, NADH, and ATP. The half-life of the activated signaling state is about 5 minutes. Also involved in the detection of blue/green ratio in light (shade under leaf canopies) and subsequent adaptations on plant growth and development. In darkness, the dark reoxidation of flavin occurs and leads to inactivated state. Perceives low blue light (LBL) and responds by directly contacting two bHLH transcription factors, PIF4 and PIF5, at chromatin on E-box variant 5'-CA[CT]GTG-3' to promote their activity and stimulate specific gene expression to adapt global physiology (e.g. hypocotyl elongation and hyponastic growth in low blue light). When activated by high-intensity blue light, catalyzes direct enzymatic conversion of molecular oxygen O(2) to reactive oxygen species (ROS) and hydrogen peroxide H(2)O(2) in vitro. ROS accumulation upon activation by blue light leads to cell death in protoplasts. Seems essential for blue-light-triggered and singlet oxygen-mediated programmed cell death (PCD). Required for the induction of nuclear genes encoding photoprotective components by GATA24 and GATA28 in extreme light intensities that exceed the electron utilization capacity of the chloroplast. Involved in shortening the circadian clock period, especially at 27 degrees Celsius, in blue light (BL) and required to maintain clock genes expression rhythm. Mediates blue light-induced gene expression and hypocotyl elongation through the inhibition of COP1-mediated degradation of the transcription factors BIT1 and HY5 and via the activation of anion channels at the plasma membrane, probably via auxin signaling. Required for the hypocotyl hook formation in darkness. Involved in blue light-dependent stomatal opening, CHS gene expression, transpiration, inhibition of stem growth and increase of root growth, probably by regulating abscisic acid (ABA). Prevents lateral roots growth by inhibiting auxin transport. Necessary for shade avoidance syndrome (SAS), characterized by leaf hyponasty and reduced lamina/petiole ratio, when exposed to blue light attenuation. Together with phototropins, involved in phototropism regulation by various blue light fluence; blue light attenuates phototropism in high fluence rates (100 umol.m-2.s-1) but enhances phototropism in low fluence rates (&lt;1.0 umol.m-2.s-1). Required for blue/UV-A wavelengths-mediated inhibition of explants shoot regeneration in vitro (e.g. new shoot apical meristems regeneration from excised cotyledons). Modulates anthocyanin accumulation in a PHYA-dependent manner in far-red-light. Acts as a PHYA/PHYB-dependent modulator of chlorophyll accumulation in red light. Contributes to most blue light deetiolation responses. May act as a chemical magnetoreceptor, via magnetically sensitive kinetics and quantum yields of photo-induced flavin / tryptophan radical pairs. The effect of near-null magnetic field on flowering is altered by changes of blue light cycle and intensity in a CRY1/CRY2-dependent manner. Involved in the strigolactone signaling that regulates hypocotyl growth in response to blue light. Modulates temperature-dependent growth and physiology maintenance, especially at warm ambient temperatures (e.g. 27 degrees Celsius) and in white light and low-light conditions, via HFR1-dependent activity; this process requires PTAC12/HMR/PAP5 (transcriptional transactivator). Functionally, implicated in promoting R protein-mediated resistance to Pseudomonas syringae pv. tomato (Pst.) DC3000 under continuous light conditions. Promotes systemic acquired resistance (SAR) and PR gene expression triggered by P.syringae. The protein is Cryptochrome-1 of Arabidopsis thaliana (Mouse-ear cress).